The chain runs to 628 residues: tRNA uridine 5-carboxymethylaminomethyl modification enzyme MnmG (628 aa).

FAD is bound at residue 13 to 18; it reads GAGHAG. 273 to 287 lines the NAD(+) pocket; that stretch reads GPRYCPSIEDKIVRF.

The protein belongs to the MnmG family. As to quaternary structure, homodimer. Heterotetramer of two MnmE and two MnmG subunits. The cofactor is FAD.

The protein localises to the cytoplasm. Its function is as follows. NAD-binding protein involved in the addition of a carboxymethylaminomethyl (cmnm) group at the wobble position (U34) of certain tRNAs, forming tRNA-cmnm(5)s(2)U34. This chain is tRNA uridine 5-carboxymethylaminomethyl modification enzyme MnmG, found in Buchnera aphidicola subsp. Acyrthosiphon pisum (strain Tuc7).